Here is a 218-residue protein sequence, read N- to C-terminus: NAD(P)H-quinone oxidoreductase subunit U, chloroplastic (218 aa).

A chloroplast-targeting transit peptide spans 1–53; that stretch reads MASLSTITQPSLVHIPGESVLHHVPSTCSFPWKPTINTKRIICSPARNSSEVS. A disordered region spans residues 47 to 72; that stretch reads RNSSEVSAEAETEGGSSTAVDEAPKE. The 65-residue stretch at 95 to 159 folds into the J domain; sequence DHYGRLGIFR…EERRMYDWSL (65 aa). The chain crosses the membrane as a helical span at residues 197 to 217; sequence ILGYFIGAWLVLGVALSVAFN.

As to quaternary structure, part of the chloroplast NDH complex, composed of a mixture of chloroplast and nucleus encoded subunits. Component of the electron donor-binding subcomplex, at least composed of NDHS, NDHT and NDHU.

It is found in the plastid. It localises to the chloroplast thylakoid membrane. It catalyses the reaction a plastoquinone + NADH + (n+1) H(+)(in) = a plastoquinol + NAD(+) + n H(+)(out). The catalysed reaction is a plastoquinone + NADPH + (n+1) H(+)(in) = a plastoquinol + NADP(+) + n H(+)(out). In terms of biological role, NDH shuttles electrons from NAD(P)H:plastoquinone, via FMN and iron-sulfur (Fe-S) centers, to quinones in the photosynthetic chain and possibly in a chloroplast respiratory chain. The immediate electron acceptor for the enzyme in this species is believed to be plastoquinone. Couples the redox reaction to proton translocation, and thus conserves the redox energy in a proton gradient. This chain is NAD(P)H-quinone oxidoreductase subunit U, chloroplastic, found in Arabidopsis thaliana (Mouse-ear cress).